A 214-amino-acid polypeptide reads, in one-letter code: Ribosomal RNA small subunit methyltransferase G (214 aa).

Residues Gly56, Phe61, 107–108 (IE), and Arg125 contribute to the S-adenosyl-L-methionine site.

The protein belongs to the methyltransferase superfamily. RNA methyltransferase RsmG family.

The protein localises to the cytoplasm. Specifically methylates the N7 position of a guanine in 16S rRNA. The polypeptide is Ribosomal RNA small subunit methyltransferase G (Syntrophomonas wolfei subsp. wolfei (strain DSM 2245B / Goettingen)).